We begin with the raw amino-acid sequence, 221 residues long: Ribosomal RNA small subunit methyltransferase Nep1 (221 aa).

Residues Gly-174, Gly-179, and 196–201 (VGDEPL) contribute to the S-adenosyl-L-methionine site.

Belongs to the class IV-like SAM-binding methyltransferase superfamily. RNA methyltransferase NEP1 family. In terms of assembly, homodimer.

It catalyses the reaction a pseudouridine in rRNA + S-adenosyl-L-methionine = an N(1)-methylpseudouridine in rRNA + S-adenosyl-L-homocysteine + H(+). Methyltransferase involved in ribosomal biogenesis. Specifically catalyzes the N1-methylation of the pseudouridine corresponding to position 914 in M.jannaschii 16S rRNA. In Pyrobaculum neutrophilum (strain DSM 2338 / JCM 9278 / NBRC 100436 / V24Sta) (Thermoproteus neutrophilus), this protein is Ribosomal RNA small subunit methyltransferase Nep1.